A 464-amino-acid chain; its full sequence is MMLRAVFRRASIRGSSSASGLGKSLQSSRVAVSAQFHSVSATETLVPRGNHAHSFHHRSCPGCPDCSRTIINGYQGTALQRWVRPFSSDSGDVVEAVVPHMGESITDGTLAAFLKKPGDRVEADEAIAQIETDKVTIDIASPASGVIQEFLVKEGDTVEPGNKVARISTSADAVSHVAPSEKAPEKPAPKPSPPAEKPKVESTKVAEKPKAPSPPPPPPSKQSAKEPQLPPKDRERRVPMTRLRKRVATRLKDSQNTFALLTTFNEVDMTNLMKLRSQYKDAFLEKHGVKLGLMSGFIKAAVSALQHQPVVNAVIDGDDIIYRDYVDISIAVGTSKGLVVPVIRDADKMNFADIEKTINGLAKKATEGTISIDEMAGGSFTVSNGGVYGSLISTPIINPPQSAILGMHSIVQRPMVVGGSVVPRPMMYVALTYDHRLIDGREAVYFLRRIKDVVEDPQRLLLDI.

The N-terminal 86 residues, 1 to 86, are a transit peptide targeting the mitochondrion; the sequence is MMLRAVFRRA…TALQRWVRPF (86 aa). Residues 93–168 enclose the Lipoyl-binding domain; sequence VVEAVVPHMG…EPGNKVARIS (76 aa). K134 is modified (N6-lipoyllysine). The interval 168–242 is disordered; it reads STSADAVSHV…DRERRVPMTR (75 aa). Positions 196 to 210 are enriched in basic and acidic residues; it reads EKPKVESTKVAEKPK. Residues 211–220 show a composition bias toward pro residues; sequence APSPPPPPPS. Active-site residues include H435 and D439.

This sequence belongs to the 2-oxoacid dehydrogenase family. In terms of assembly, forms a 24-polypeptide structural core with octahedral symmetry. (R)-lipoate is required as a cofactor.

The protein resides in the mitochondrion. It catalyses the reaction N(6)-[(R)-dihydrolipoyl]-L-lysyl-[protein] + succinyl-CoA = N(6)-[(R)-S(8)-succinyldihydrolipoyl]-L-lysyl-[protein] + CoA. It participates in amino-acid degradation; L-lysine degradation via saccharopine pathway; glutaryl-CoA from L-lysine: step 6/6. In terms of biological role, the 2-oxoglutarate dehydrogenase complex catalyzes the overall conversion of 2-oxoglutarate to succinyl-CoA and CO(2). It contains multiple copies of three enzymatic components: 2-oxoglutarate dehydrogenase (E1), dihydrolipoamide succinyltransferase (E2) and lipoamide dehydrogenase (E3). This Arabidopsis thaliana (Mouse-ear cress) protein is Dihydrolipoyllysine-residue succinyltransferase component of 2-oxoglutarate dehydrogenase complex 1, mitochondrial.